The sequence spans 113 residues: ATP-dependent Clp protease adapter protein ClpS (113 aa).

Over residues 1 to 11 (MHRDLHMMSDR) the composition is skewed to basic and acidic residues. A disordered region spans residues 1-25 (MHRDLHMMSDRSEDDGDTSILTATK).

This sequence belongs to the ClpS family. In terms of assembly, binds to the N-terminal domain of the chaperone ClpA.

Functionally, involved in the modulation of the specificity of the ClpAP-mediated ATP-dependent protein degradation. The polypeptide is ATP-dependent Clp protease adapter protein ClpS (Roseobacter denitrificans (strain ATCC 33942 / OCh 114) (Erythrobacter sp. (strain OCh 114))).